Consider the following 296-residue polypeptide: Glycine--tRNA ligase alpha subunit (296 aa).

The protein belongs to the class-II aminoacyl-tRNA synthetase family. As to quaternary structure, tetramer of two alpha and two beta subunits.

It localises to the cytoplasm. The enzyme catalyses tRNA(Gly) + glycine + ATP = glycyl-tRNA(Gly) + AMP + diphosphate. This is Glycine--tRNA ligase alpha subunit from Maricaulis maris (strain MCS10) (Caulobacter maris).